The sequence spans 492 residues: Cytochrome P450 2B12 (492 aa).

Ser129 is subject to Phosphoserine. Cys437 is a binding site for heme.

It belongs to the cytochrome P450 family. The cofactor is heme. Preputial gland, but not in liver.

The protein localises to the endoplasmic reticulum membrane. The protein resides in the microsome membrane. The enzyme catalyses an organic molecule + reduced [NADPH--hemoprotein reductase] + O2 = an alcohol + oxidized [NADPH--hemoprotein reductase] + H2O + H(+). Its function is as follows. Cytochromes P450 are a group of heme-thiolate monooxygenases. In liver microsomes, this enzyme is involved in an NADPH-dependent electron transport pathway. This isozyme seems responsible for metabolism of 2,2',4,4',5,5'-hexachlorobiphenyl. This is Cytochrome P450 2B12 (Cyp2b12) from Rattus norvegicus (Rat).